The following is a 299-amino-acid chain: Protease HtpX homolog (299 aa).

The next 2 helical transmembrane spans lie at 14–34 (WLLL…VGNL) and 39–59 (GFGG…TMIF). H143 serves as a coordination point for Zn(2+). The active site involves E144. H147 provides a ligand contact to Zn(2+). The next 2 membrane-spanning stretches (helical) occupy residues 153–173 (IRIS…AGMA) and 198–218 (IVFL…ATLV). E227 lines the Zn(2+) pocket.

This sequence belongs to the peptidase M48B family. It depends on Zn(2+) as a cofactor.

It localises to the cell membrane. In Streptococcus thermophilus (strain ATCC BAA-250 / LMG 18311), this protein is Protease HtpX homolog.